The primary structure comprises 446 residues: Tubulin alpha chain-like 3 (446 aa).

Positions 1–4 (MREC) match the MREC motif motif. 8 residues coordinate GTP: Gln-11, Glu-78, Ser-147, Gly-151, Thr-152, Thr-186, Asn-213, and Asn-235. Glu-78 serves as a coordination point for Mg(2+). Residue Glu-261 is part of the active site.

It belongs to the tubulin family. As to quaternary structure, dimer of alpha and beta chains. A typical microtubule is a hollow water-filled tube with an outer diameter of 25 nm and an inner diameter of 15 nM. Alpha-beta heterodimers associate head-to-tail to form protofilaments running lengthwise along the microtubule wall with the beta-tubulin subunit facing the microtubule plus end conferring a structural polarity. Microtubules usually have 13 protofilaments but different protofilament numbers can be found in some organisms and specialized cells. Mg(2+) is required as a cofactor. In terms of processing, some glutamate residues at the C-terminus are polyglycylated, resulting in polyglycine chains on the gamma-carboxyl group. Glycylation is mainly limited to tubulin incorporated into axonemes (cilia and flagella) whereas glutamylation is prevalent in neuronal cells, centrioles, axonemes, and the mitotic spindle. Both modifications can coexist on the same protein on adjacent residues, and lowering polyglycylation levels increases polyglutamylation, and reciprocally. Cilia and flagella glycylation is required for their stability and maintenance. Flagella glycylation controls sperm motility. Some glutamate residues at the C-terminus are polyglutamylated, resulting in polyglutamate chains on the gamma-carboxyl group. Polyglutamylation plays a key role in microtubule severing by spastin (SPAST). SPAST preferentially recognizes and acts on microtubules decorated with short polyglutamate tails: severing activity by SPAST increases as the number of glutamates per tubulin rises from one to eight, but decreases beyond this glutamylation threshold. Glutamylation is also involved in cilia motility.

It is found in the cytoplasm. The protein localises to the cytoskeleton. The enzyme catalyses GTP + H2O = GDP + phosphate + H(+). Tubulin is the major constituent of microtubules, a cylinder consisting of laterally associated linear protofilaments composed of alpha- and beta-tubulin heterodimers. Microtubules grow by the addition of GTP-tubulin dimers to the microtubule end, where a stabilizing cap forms. Below the cap, tubulin dimers are in GDP-bound state, owing to GTPase activity of alpha-tubulin. The polypeptide is Tubulin alpha chain-like 3 (Tubal3) (Mus musculus (Mouse)).